We begin with the raw amino-acid sequence, 175 residues long: MNLDFIKSKIAAVPDFPKPGIMFRDITPLLADPQGLRKTAEAMAQELKNKGIQPTIIAGTESRGFIFGVALAEVLGLGFVPVRKPGKLPRATYSVKYDLEYGSDSLEIHQDAFKVTDEVLVVDDLLATGGTAKATVDLIEKTQAKVAGLIFVMELDSLGGREVLAGYNVSALIKF.

This sequence belongs to the purine/pyrimidine phosphoribosyltransferase family. In terms of assembly, homodimer.

It is found in the cytoplasm. It catalyses the reaction AMP + diphosphate = 5-phospho-alpha-D-ribose 1-diphosphate + adenine. Its pathway is purine metabolism; AMP biosynthesis via salvage pathway; AMP from adenine: step 1/1. Catalyzes a salvage reaction resulting in the formation of AMP, that is energically less costly than de novo synthesis. The polypeptide is Adenine phosphoribosyltransferase (Francisella tularensis subsp. holarctica (strain FTNF002-00 / FTA)).